Consider the following 498-residue polypeptide: MASQGTKRSYEQMETDGERQNATEIRASVGKMIDGIGRFYIQMCTELKLSDYEGRLIQNSLTIERMVLSAFDERRNRYLEEHPSAGKDPKKTGGPIYKRVDGRWMRELVLYDKEEIRRIWRQANNGDDATRGLTHMMIWHSNLNDTTYQRTRALVRTGMDPRMCSLMQGSTLPRRSGAAGAAVKGIGTMVMELIRMIKRGINDRNFWRGENGRKTRSAYERMCNILKGKFQTAAQRAMMDQVRESRNPGNAEIEDLIFSARSALILRGSVAHKSCLPACVYGPAVSSGYDFEKEGYSLVGIDPFKLLQNSQVYSLIRPNENPAHKSQLVWMACHSAAFEDLRLLSFIRGTKVSPRGKLSTRGVQIASNENMDNMESSTLELRSRYWAIRTRSGGNTNQQRASAGQISVQPTFSVQRNLPFEKSTVMAAFTGNTEGRTSDMRAEIIRMMEGAKPEEVSFRGRGVFELSDEKATNPIVPSFDMSNEGSYFFGDNAEEYDN.

The Unconventional nuclear localization signal signature appears at 1–18 (MASQGTKRSYEQMETDGE). Residues 1–21 (MASQGTKRSYEQMETDGERQN) are disordered. The segment covering 8–21 (RSYEQMETDGERQN) has biased composition (basic and acidic residues). Positions 198–216 (KRGINDRNFWRGENGRKTR) match the Bipartite nuclear localization signal motif.

Belongs to the influenza viruses nucleoprotein family. Homomultimerizes to form the nucleocapsid. May bind host exportin-1/XPO1. Binds to viral genomic RNA. Protein-RNA contacts are mediated by a combination of electrostatic interactions between positively charged residues and the phosphate backbone and planar interactions between aromatic side chains and bases. Post-translationally, late in virus-infected cells, may be cleaved from a 56-kDa protein to a 53-kDa protein by a cellular caspase. This cleavage might be a marker for the onset of apoptosis in infected cells or have a specific function in virus host interaction.

It is found in the virion. The protein resides in the host nucleus. Its function is as follows. Encapsidates the negative strand viral RNA, protecting it from nucleases. The encapsidated genomic RNA is termed the ribonucleoprotein (RNP) and serves as template for transcription and replication. The RNP needs to be localized in the host nucleus to start an infectious cycle, but is too large to diffuse through the nuclear pore complex. NP comprises at least 2 nuclear localization signals that are responsible for the active RNP import into the nucleus through cellular importin alpha/beta pathway. Later in the infection, nclear export of RNPs are mediated through viral proteins NEP interacting with M1 which binds nucleoproteins. It is possible that nucleoprotein binds directly host exportin-1/XPO1 and plays an active role in RNPs nuclear export. M1 interaction with RNP seems to hide nucleoprotein's nuclear localization signals. Soon after a virion infects a new cell, M1 dissociates from the RNP under acidification of the virion driven by M2 protein. Dissociation of M1 from RNP unmasks nucleoprotein's nuclear localization signals, targeting the RNP to the nucleus. The chain is Nucleoprotein from Influenza A virus (strain A/Memphis/6/1986 H3N2).